The chain runs to 440 residues: Xylose isomerase (440 aa).

Catalysis depends on residues His99 and Asp102. Mg(2+) contacts are provided by Glu230, Glu266, His269, Asp294, Asp305, Asp307, and Asp337.

This sequence belongs to the xylose isomerase family. As to quaternary structure, homotetramer. It depends on Mg(2+) as a cofactor.

The protein resides in the cytoplasm. It catalyses the reaction alpha-D-xylose = alpha-D-xylulofuranose. The sequence is that of Xylose isomerase from Halalkalibacterium halodurans (strain ATCC BAA-125 / DSM 18197 / FERM 7344 / JCM 9153 / C-125) (Bacillus halodurans).